The primary structure comprises 178 residues: MAAQIIEILSPEEIRRTLTRLASQVIEKNSDLSELVLLGIYTRGVPLAHQLAQQIEMLEQVKVPVGAIDVTLYRDDLKRIKTRTPAKTKIPLSLTGKRVVLVDDVIYKGRTIRAALNAVTEYGRPQVIRLLTLVDRGHRELPIHPDFVGKILPTAAEEQVKVYLQDPDGRDTVELIKG.

Residues 42-43 (TR), R83, 103-111 (DDVIYKGRT), R136, and V160 each bind substrate. A PRPP-binding motif is present at residues 99-111 (VVLVDDVIYKGRT).

The protein belongs to the purine/pyrimidine phosphoribosyltransferase family. PyrR subfamily.

It carries out the reaction UMP + diphosphate = 5-phospho-alpha-D-ribose 1-diphosphate + uracil. In terms of biological role, regulates the transcription of the pyrimidine nucleotide (pyr) operon in response to exogenous pyrimidines. Also displays a weak uracil phosphoribosyltransferase activity which is not physiologically significant. This is Bifunctional protein PyrR from Synechocystis sp. (strain ATCC 27184 / PCC 6803 / Kazusa).